The sequence spans 417 residues: Tyrosine--tRNA ligase (417 aa).

L-tyrosine is bound at residue Tyr-39. Residues Cys-44–Asn-53 carry the 'HIGH' region motif. L-tyrosine is bound by residues Tyr-176 and Gln-180. Positions Lys-236 to Thr-240 match the 'KMSKS' region motif. Lys-239 lines the ATP pocket. Residues Phe-350–Ala-417 form the S4 RNA-binding domain.

The protein belongs to the class-I aminoacyl-tRNA synthetase family. TyrS type 1 subfamily. In terms of assembly, homodimer.

It localises to the cytoplasm. It carries out the reaction tRNA(Tyr) + L-tyrosine + ATP = L-tyrosyl-tRNA(Tyr) + AMP + diphosphate + H(+). Functionally, catalyzes the attachment of tyrosine to tRNA(Tyr) in a two-step reaction: tyrosine is first activated by ATP to form Tyr-AMP and then transferred to the acceptor end of tRNA(Tyr). The protein is Tyrosine--tRNA ligase of Bradyrhizobium diazoefficiens (strain JCM 10833 / BCRC 13528 / IAM 13628 / NBRC 14792 / USDA 110).